We begin with the raw amino-acid sequence, 205 residues long: Ras-related protein rab-6.1 (205 aa).

Residues 18–25 (GEQSVGKT), threonine 43, 66–70 (DTAGQ), and 124–127 (NKTD) each bind GTP. Residues cysteine 203 and cysteine 205 are each lipidated (S-geranylgeranyl cysteine). Cysteine 205 carries the cysteine methyl ester modification.

Belongs to the small GTPase superfamily. Rab family. In terms of assembly, interacts with GARP complex component vps-52. In terms of tissue distribution, highly expressed in body wall muscle, intestine, somatic gonad, distal tip cells, vulva, and neurons including AVB, AVD, RIG, and PVC (at protein level). Not expressed in AVA and RMDV neurons.

Its subcellular location is the cell membrane. The protein resides in the cell projection. It localises to the dendrite. The protein localises to the perikaryon. It is found in the golgi apparatus. Its subcellular location is the cytoplasmic vesicle. The protein resides in the secretory vesicle. Functionally, the small GTPases Rab are key regulators of intracellular membrane trafficking, from the formation of transport vesicles to their fusion with membranes. Rabs cycle between an inactive GDP-bound form and an active GTP-bound form that is able to recruit to membranes different set of downstream effectors directly responsible for vesicle formation, movement, tethering and fusion. In its active GTP-bound form, acts redundantly with rab-6.2 (in its active GTP-bound form) to positively regulate the retrograde trafficking of cargo molecules from endosomes to Golgi structures. Required for the retrograde trafficking of glr-1, a subunit of AMPA-type glutamate receptors (AMPRs), out of early endosomes and into the Golgi compartment in neurons. Together with rab-6.2, promotes the retrograde trafficking of mig-14 from endosomes to Golgi structures in the intestine. In oocytes, in its active GTP-bound form, involved in the membrane fusion and exocytosis of secretory vesicles (cortical granules) to play a role in the remodeling of the embryo surface following fertilization. Recruits sep-1 to cortical granules (derived from the Golgi complex) for exocytosis during the oocyte-to-embryo transition. Required for seam cell division and alae formation. Promotes spontaneous reversals in locomotion. The chain is Ras-related protein rab-6.1 from Caenorhabditis elegans.